The sequence spans 289 residues: UTP--glucose-1-phosphate uridylyltransferase 2 (289 aa).

It belongs to the UDPGP type 2 family.

It carries out the reaction alpha-D-glucose 1-phosphate + UTP + H(+) = UDP-alpha-D-glucose + diphosphate. It participates in glycolipid metabolism; diglucosyl-diacylglycerol biosynthesis. In terms of biological role, catalyzes the formation of UDP-glucose from glucose-1-phosphate and UTP. This is an intermediate step in the biosynthesis of diglucosyl-diacylglycerol (Glc2-DAG), i.e. a glycolipid found in the membrane, which is also used as a membrane anchor for lipoteichoic acid (LTA). The protein is UTP--glucose-1-phosphate uridylyltransferase 2 (gtaB2) of Staphylococcus saprophyticus subsp. saprophyticus (strain ATCC 15305 / DSM 20229 / NCIMB 8711 / NCTC 7292 / S-41).